Consider the following 270-residue polypeptide: 5'-AMP-activated protein kinase subunit beta-1 (270 aa).

The interval 1 to 46 is disordered; that stretch reads MGNTSSERAALERHGGHKTPRRDSSGGTKDGDRPKILMDSPEDADL. A lipid anchor (N-myristoyl glycine) is attached at glycine 2. A Phosphothreonine modification is found at threonine 4. 2 positions are modified to phosphoserine: serine 5 and serine 6. Residue threonine 19 is modified to Phosphothreonine. Residues 21 to 36 are compositionally biased toward basic and acidic residues; the sequence is RRDSSGGTKDGDRPKI. Serine 24 and serine 25 each carry phosphoserine; by autocatalysis. A phosphoserine mark is found at serine 40, serine 96, and serine 101. A glycogen-binding domain region spans residues 68–163; sequence EVNDKAPAQA…QVKKTDFEVF (96 aa). Serine 108 carries the phosphoserine; by autocatalysis modification. Threonine 148 bears the Phosphothreonine mark. Serine 182 bears the Phosphoserine mark.

It belongs to the 5'-AMP-activated protein kinase beta subunit family. AMPK is a heterotrimer of an alpha catalytic subunit (PRKAA1 or PRKAA2), a beta (PRKAB1 or PRKAB2) and a gamma non-catalytic subunits (PRKAG1, PRKAG2 or PRKAG3). Interacts with FNIP1 and FNIP2. Post-translationally, phosphorylated when associated with the catalytic subunit (PRKAA1 or PRKAA2). Phosphorylated by ULK1; leading to negatively regulate AMPK activity and suggesting the existence of a regulatory feedback loop between ULK1 and AMPK.

Its function is as follows. Non-catalytic subunit of AMP-activated protein kinase (AMPK), an energy sensor protein kinase that plays a key role in regulating cellular energy metabolism. In response to reduction of intracellular ATP levels, AMPK activates energy-producing pathways and inhibits energy-consuming processes: inhibits protein, carbohydrate and lipid biosynthesis, as well as cell growth and proliferation. AMPK acts via direct phosphorylation of metabolic enzymes, and by longer-term effects via phosphorylation of transcription regulators. Also acts as a regulator of cellular polarity by remodeling the actin cytoskeleton; probably by indirectly activating myosin. Beta non-catalytic subunit acts as a scaffold on which the AMPK complex assembles, via its C-terminus that bridges alpha (PRKAA1 or PRKAA2) and gamma subunits (PRKAG1, PRKAG2 or PRKAG3). In Pongo abelii (Sumatran orangutan), this protein is 5'-AMP-activated protein kinase subunit beta-1 (PRKAB1).